Consider the following 118-residue polypeptide: ISQYITKAQGFFNQAIYWTKVTVEVSKQIYIREGLAPPSVAEIQQVYQGLYKKALEFAAQPKTSADGLIKVAKSLSKEEYLRFGAYFIQIVGLFSLGEIIGRRQIVGYPSFGPKEHHH.

In terms of assembly, F-type ATP synthases have 2 components, the catalytic core F(1) and the membrane-embedded component F(0), linked together by a central stalk and a peripheral stalk. The central stalk, also called rotor shaft, is often seen as part of F(1). The peripheral stalk is seen as part of F(0). F(0) contains the membrane channel next to the rotor. F-type ATP synthases form dimers but each monomer functions independently in ATP generation. The dimer consists of 18 different polypeptides: ATP1 (subunit alpha, part of F(1), 3 molecules per monomer), ATP2 (subunit beta, part of F(1), 3 molecules per monomer), ATP3 (subunit gamma, part of the central stalk), ATP4 (subunit b, part of the peripheral stalk), ATP5/OSCP (subunit 5/OSCP, part of the peripheral stalk), ATP6 (subunit a, part of the peripheral stalk), ATP7 (subunit d, part of the peripheral stalk), ATP8 (subunit 8, part of the peripheral stalk), OLI1 (subunit c, part of the rotor, 10 molecules per monomer), ATP14 (subunit h, part of the peripheral stalk), ATP15 (subunit epsilon, part of the central stalk), ATP16 (subunit delta, part of the central stalk), ATP17 (subunit f, part of the peripheral stalk), ATP18 (subunit i/j, part of the peripheral stalk). Dimer-specific subunits are ATP19 (subunit k, at interface between monomers), ATP20 (subunit g, at interface between monomers), TIM11 (subunit e, at interface between monomers). Also contains subunit L.

It is found in the mitochondrion inner membrane. In terms of biological role, mitochondrial membrane ATP synthase (F(1)F(0) ATP synthase or Complex V) produces ATP from ADP in the presence of a proton gradient across the membrane which is generated by electron transport complexes of the respiratory chain. F-type ATP synthases consist of two structural domains, F(1) - containing the extramembraneous catalytic core, and F(0) - containing the membrane proton channel, linked together by a central stalk and a peripheral stalk. During catalysis, ATP synthesis in the catalytic domain of F(1) is coupled via a rotary mechanism of the central stalk subunits to proton translocation. Part of the complex F(0) domain Minor subunit located with subunit a/ATP6 in the membrane. Together with subunit e/TIM11, probably contributes to membrane curvature at the site of the ATP synthase dimer, ultimately contributing to formation of cristae. The sequence is that of ATP synthase subunit g, mitochondrial from Pichia angusta (Yeast).